A 309-amino-acid chain; its full sequence is Olfactory receptor 5H2 (309 aa).

Over 1–28 (MEQDNTTLLTEFVLTGLTYQPEWKMPLF) the chain is Extracellular. Asparagine 5 carries N-linked (GlcNAc...) asparagine glycosylation. Residues 29-49 (LVFLVIYLITIVWNLGLIALI) traverse the membrane as a helical segment. Residues 50–56 (WNDPQLH) lie on the Cytoplasmic side of the membrane. A helical transmembrane segment spans residues 57 to 77 (IPMYFFLGSLAFVDAWISSTV). The Extracellular segment spans residues 78-97 (TPKMLVNFLAKNRMISLSEC). Cysteine 97 and cysteine 179 are joined by a disulfide. The chain crosses the membrane as a helical span at residues 98–118 (MIQFFSFAFGGTTECFLLATM). At 119–143 (AYDRYVAICKPLLYPVIMNNSLCIR) the chain is on the cytoplasmic side. Residues 144–164 (LLAFSFLGGFLHALIHEVLIF) traverse the membrane as a helical segment. The Extracellular portion of the chain corresponds to 165–193 (RLTFCNSNIIHHFYCDIIPLFMISCTDPS). The chain crosses the membrane as a helical span at residues 194–214 (INFLMVFILSGSIQVFTIVTV). Residues 215–239 (LNSYTFALFTILKKKSVRGVRKAFS) lie on the Cytoplasmic side of the membrane. The helical transmembrane segment at 240–260 (TCGAHLLSVSLYYGPLIFMYL) threads the bilayer. Residues 261–271 (RPASPQADDQD) are Extracellular-facing. The helical transmembrane segment at 272–292 (MIDSVFYTIIIPLLNPIIYSL) threads the bilayer. Residues 293-309 (RNKQVIDSFTKMVKRNV) lie on the Cytoplasmic side of the membrane.

Belongs to the G-protein coupled receptor 1 family.

The protein localises to the cell membrane. Functionally, odorant receptor. The protein is Olfactory receptor 5H2 (OR5H2) of Homo sapiens (Human).